The following is a 69-amino-acid chain: DNA gyrase inhibitor YacG (69 aa).

Residues C9, C12, C28, and C32 each coordinate Zn(2+). Positions 48 to 69 (PVSPDAEDELFSGDLEAPHRGH) are disordered.

Belongs to the DNA gyrase inhibitor YacG family. Interacts with GyrB. Requires Zn(2+) as cofactor.

In terms of biological role, inhibits all the catalytic activities of DNA gyrase by preventing its interaction with DNA. Acts by binding directly to the C-terminal domain of GyrB, which probably disrupts DNA binding by the gyrase. The protein is DNA gyrase inhibitor YacG of Pseudomonas syringae pv. syringae (strain B728a).